The sequence spans 609 residues: Meiotically up-regulated gene 28 protein (609 aa).

RRM domains lie at 20–103 (ISIY…YTHI) and 419–499 (CNLF…YAEK).

The protein localises to the cytoplasm. Its function is as follows. Has a role in sporulation. The chain is Meiotically up-regulated gene 28 protein (mug28) from Schizosaccharomyces pombe (strain 972 / ATCC 24843) (Fission yeast).